The chain runs to 113 residues: U11-theraphotoxin-Hhn1m (113 aa).

The first 21 residues, 1–21 (MNTVRGTFLLVFGLAASLGQA), serve as a signal peptide directing secretion. Residues 22 to 74 (DKNENRREMQKKTEQGKSYLNFAENLLLQKLEELEAKLLEKHSKKSKNSRQKR) constitute a propeptide that is removed on maturation. Cystine bridges form between Cys-75–Cys-90, Cys-82–Cys-95, and Cys-89–Cys-110.

Belongs to the neurotoxin 14 (magi-1) family. 01 (HNTX-16) subfamily. As to expression, expressed by the venom gland.

The protein resides in the secreted. Probable ion channel inhibitor. This Cyriopagopus hainanus (Chinese bird spider) protein is U11-theraphotoxin-Hhn1m.